The sequence spans 284 residues: Polyamine aminopropyltransferase (284 aa).

The 236-residue stretch at 2 to 237 (ELWYTEQHTE…GHWLFGFASK (236 aa)) folds into the PABS domain. Gln-31 is an S-methyl-5'-thioadenosine binding site. 2 residues coordinate spermidine: His-62 and Asp-86. S-methyl-5'-thioadenosine contacts are provided by residues Glu-106 and 137–138 (DG). Catalysis depends on Asp-155, which acts as the Proton acceptor. 155–158 (DSTD) is a spermidine binding site. Pro-162 contacts S-methyl-5'-thioadenosine.

The protein belongs to the spermidine/spermine synthase family. In terms of assembly, homodimer or homotetramer.

Its subcellular location is the cytoplasm. It carries out the reaction S-adenosyl 3-(methylsulfanyl)propylamine + putrescine = S-methyl-5'-thioadenosine + spermidine + H(+). It participates in amine and polyamine biosynthesis; spermidine biosynthesis; spermidine from putrescine: step 1/1. Its function is as follows. Catalyzes the irreversible transfer of a propylamine group from the amino donor S-adenosylmethioninamine (decarboxy-AdoMet) to putrescine (1,4-diaminobutane) to yield spermidine. The chain is Polyamine aminopropyltransferase from Alkaliphilus oremlandii (strain OhILAs) (Clostridium oremlandii (strain OhILAs)).